The primary structure comprises 551 residues: Methionine--tRNA ligase (551 aa).

The 'HIGH' region signature appears at 12-22; sequence PYANGPLHFGH. The Zn(2+) site is built by Cys144, Cys147, Cys157, and Cys160. Residues 330–334 carry the 'KMSKS' region motif; sequence QFSKS. An ATP-binding site is contributed by Lys333.

Belongs to the class-I aminoacyl-tRNA synthetase family. MetG type 1 subfamily. In terms of assembly, monomer. The cofactor is Zn(2+).

The protein resides in the cytoplasm. The catalysed reaction is tRNA(Met) + L-methionine + ATP = L-methionyl-tRNA(Met) + AMP + diphosphate. Its function is as follows. Is required not only for elongation of protein synthesis but also for the initiation of all mRNA translation through initiator tRNA(fMet) aminoacylation. The protein is Methionine--tRNA ligase (metG) of Chlamydia pneumoniae (Chlamydophila pneumoniae).